A 741-amino-acid polypeptide reads, in one-letter code: Penicillin-binding protein 1B (741 aa).

The Cytoplasmic portion of the chain corresponds to 1–12 (MYPVNLKLSIKF). The helical; Signal-anchor for type II membrane protein transmembrane segment at 13–33 (LFYFFLYFLLIIIIYGVYLYF) threads the bilayer. The Extracellular segment spans residues 34 to 741 (KINQVIHGKI…WIRNHNIFCT (708 aa)). The interval 139–311 (LRLDPQLIAM…SLYNPWNNPV (173 aa)) is transglycosylase. Glu-177 functions as the Proton donor; for transglycosylase activity in the catalytic mechanism. The tract at residues 395–687 (ENAIRHGIQQ…STGAMKIYHN (293 aa)) is transpeptidase. Ser-454 acts as the Acyl-ester intermediate; for transpeptidase activity in catalysis.

In the N-terminal section; belongs to the glycosyltransferase 51 family. It in the C-terminal section; belongs to the transpeptidase family.

It localises to the cell membrane. The catalysed reaction is [GlcNAc-(1-&gt;4)-Mur2Ac(oyl-L-Ala-gamma-D-Glu-L-Lys-D-Ala-D-Ala)](n)-di-trans,octa-cis-undecaprenyl diphosphate + beta-D-GlcNAc-(1-&gt;4)-Mur2Ac(oyl-L-Ala-gamma-D-Glu-L-Lys-D-Ala-D-Ala)-di-trans,octa-cis-undecaprenyl diphosphate = [GlcNAc-(1-&gt;4)-Mur2Ac(oyl-L-Ala-gamma-D-Glu-L-Lys-D-Ala-D-Ala)](n+1)-di-trans,octa-cis-undecaprenyl diphosphate + di-trans,octa-cis-undecaprenyl diphosphate + H(+). It carries out the reaction Preferential cleavage: (Ac)2-L-Lys-D-Ala-|-D-Ala. Also transpeptidation of peptidyl-alanyl moieties that are N-acyl substituents of D-alanine.. It participates in cell wall biogenesis; peptidoglycan biosynthesis. In terms of biological role, cell wall formation. Synthesis of cross-linked peptidoglycan from the lipid intermediates. The enzyme has a penicillin-insensitive transglycosylase N-terminal domain (formation of linear glycan strands) and a penicillin-sensitive transpeptidase C-terminal domain (cross-linking of the peptide subunits). This is Penicillin-binding protein 1B (mrcB) from Buchnera aphidicola subsp. Baizongia pistaciae (strain Bp).